We begin with the raw amino-acid sequence, 174 residues long: Gamma-crystallin M3 (174 aa).

2 Beta/gamma crystallin 'Greek key' domains span residues 2–40 (GKIIFYEDRNFQGRSYECSSDCSDMSTYLSRCHSCRVES) and 41–82 (GCFV…RMVP). Residues 83–87 (QYRGP) are connecting peptide. 2 Beta/gamma crystallin 'Greek key' domains span residues 88-128 (YRMR…HVMD) and 129-171 (GHWL…RRIM).

The protein belongs to the beta/gamma-crystallin family. Monomer.

Crystallins are the dominant structural components of the vertebrate eye lens. In Cyprinus carpio (Common carp), this protein is Gamma-crystallin M3.